Reading from the N-terminus, the 193-residue chain is Large ribosomal subunit protein uL11 (193 aa).

Belongs to the universal ribosomal protein uL11 family. Part of the ribosomal stalk of the 50S ribosomal subunit. Interacts with L10 and the large rRNA to form the base of the stalk. L10 forms an elongated spine to which L12 dimers bind in a sequential fashion forming a multimeric L10(L12)X complex. Post-translationally, one or more lysine residues are methylated.

Its function is as follows. Forms part of the ribosomal stalk which helps the ribosome interact with GTP-bound translation factors. The polypeptide is Large ribosomal subunit protein uL11 (Mycoplasmopsis synoviae (strain 53) (Mycoplasma synoviae)).